Consider the following 224-residue polypeptide: Holliday junction branch migration complex subunit RuvA (224 aa).

Residues 1–64 (MIGRLSGVLV…EDLLQLYGFP (64 aa)) form a domain I region. The segment at 65 to 143 (TLLEKEWHRL…EVMAMGGTLE (79 aa)) is domain II. The flexible linker stretch occupies residues 144–171 (AALDGVIEDGMAASEGIEPPSAARPAVP). A domain III region spans residues 172–224 (SAASDQAGALSALVNLGYGQGEAASAVATAAGEGAVGETDIIRAALRLLAPKG).

This sequence belongs to the RuvA family. Homotetramer. Forms an RuvA(8)-RuvB(12)-Holliday junction (HJ) complex. HJ DNA is sandwiched between 2 RuvA tetramers; dsDNA enters through RuvA and exits via RuvB. An RuvB hexamer assembles on each DNA strand where it exits the tetramer. Each RuvB hexamer is contacted by two RuvA subunits (via domain III) on 2 adjacent RuvB subunits; this complex drives branch migration. In the full resolvosome a probable DNA-RuvA(4)-RuvB(12)-RuvC(2) complex forms which resolves the HJ.

It is found in the cytoplasm. In terms of biological role, the RuvA-RuvB-RuvC complex processes Holliday junction (HJ) DNA during genetic recombination and DNA repair, while the RuvA-RuvB complex plays an important role in the rescue of blocked DNA replication forks via replication fork reversal (RFR). RuvA specifically binds to HJ cruciform DNA, conferring on it an open structure. The RuvB hexamer acts as an ATP-dependent pump, pulling dsDNA into and through the RuvAB complex. HJ branch migration allows RuvC to scan DNA until it finds its consensus sequence, where it cleaves and resolves the cruciform DNA. The sequence is that of Holliday junction branch migration complex subunit RuvA from Dinoroseobacter shibae (strain DSM 16493 / NCIMB 14021 / DFL 12).